A 284-amino-acid polypeptide reads, in one-letter code: Glutamate 5-kinase 2 (284 aa).

Lysine 26 serves as a coordination point for ATP. Substrate contacts are provided by serine 67, aspartate 154, and asparagine 166. ATP-binding positions include 186–187 (SD) and 228–234 (SGGMVTK).

The protein belongs to the glutamate 5-kinase family.

Its subcellular location is the cytoplasm. It carries out the reaction L-glutamate + ATP = L-glutamyl 5-phosphate + ADP. It participates in amino-acid biosynthesis; L-proline biosynthesis; L-glutamate 5-semialdehyde from L-glutamate: step 1/2. Catalyzes the transfer of a phosphate group to glutamate to form L-glutamate 5-phosphate. The chain is Glutamate 5-kinase 2 from Mesorhizobium japonicum (strain LMG 29417 / CECT 9101 / MAFF 303099) (Mesorhizobium loti (strain MAFF 303099)).